The primary structure comprises 185 residues: Superoxide dismutase [Cu-Zn] (185 aa).

A signal peptide spans 1–18 (MTAFYKLCGMSMLSLVLA). Residues His-85, His-87, and His-102 each contribute to the Cu cation site. An intrachain disulfide couples Cys-92 to Cys-180. His-102, His-111, His-120, and Asp-123 together coordinate Zn(2+). His-158 contributes to the Cu cation binding site.

Belongs to the Cu-Zn superoxide dismutase family. In terms of assembly, homodimer. Requires Cu cation as cofactor. Zn(2+) serves as cofactor.

It is found in the periplasm. It catalyses the reaction 2 superoxide + 2 H(+) = H2O2 + O2. In terms of biological role, destroys radicals which are normally produced within the cells and which are toxic to biological systems. This is Superoxide dismutase [Cu-Zn] (sodC) from Francisella tularensis subsp. holarctica (strain LVS).